A 534-amino-acid polypeptide reads, in one-letter code: Monolignol oxidoreductase AtBBE-like 13 (534 aa).

The signal sequence occupies residues 1–29; the sequence is MAFVLMNNTNAFLVTLLLLSLSYIPLSFS. N-linked (GlcNAc...) asparagine glycans are attached at residues N7 and N59. C38 and C102 form a disulfide bridge. Positions 117–181 form a cross-link, 6-(S-cysteinyl)-8alpha-(pros-histidyl)-FAD (His-Cys); it reads HDYEGLSYVS…KIHGFPAGLC (65 aa).

Belongs to the oxygen-dependent FAD-linked oxidoreductase family. FAD serves as cofactor. Post-translationally, the FAD cofactor is bound via a bicovalent 6-S-cysteinyl, 8alpha-N1-histidyl FAD linkage.

It localises to the secreted. The protein resides in the cell wall. The enzyme catalyses (E)-4-coumaroyl alcohol + A = (E)-4-coumaraldehyde + AH2. The catalysed reaction is (E)-coniferol + A = (E)-coniferaldehyde + AH2. It catalyses the reaction (E)-sinapyl alcohol + A = (E)-sinapaldehyde + AH2. The protein operates within phenylpropanoid metabolism. Its function is as follows. Mediates oxidation of p-hydroxylated derivatives of cinnamyl alcohol (i.e. the monolignols p-coumaryl-, coniferyl-, and sinapyl alcohol) to their corresponding aldehydes. The electron acceptor required for these reactions is not known, but does not seem to be dioxygen. Is much less efficient towards cinnamyl alcohol. This chain is Monolignol oxidoreductase AtBBE-like 13, found in Arabidopsis thaliana (Mouse-ear cress).